A 606-amino-acid chain; its full sequence is Probable translation initiation factor IF-2 (606 aa).

One can recognise a tr-type G domain in the interval 11 to 230 (IRQPIVVVLG…LTGLVQRFMK (220 aa)). A G1 region spans residues 20-27 (GHVDHGKT). 20 to 27 (GHVDHGKT) is a binding site for GTP. The G2 stretch occupies residues 45 to 49 (EITQH). Positions 85–88 (DTPG) are G3. Residues 85-89 (DTPGH) and 139-142 (NKID) each bind GTP. The tract at residues 139 to 142 (NKID) is G4. Residues 207-209 (SAK) form a G5 region.

Belongs to the TRAFAC class translation factor GTPase superfamily. Classic translation factor GTPase family. IF-2 subfamily.

In terms of biological role, function in general translation initiation by promoting the binding of the formylmethionine-tRNA to ribosomes. Seems to function along with eIF-2. This chain is Probable translation initiation factor IF-2, found in Staphylothermus marinus (strain ATCC 43588 / DSM 3639 / JCM 9404 / F1).